The primary structure comprises 356 residues: Phosphoribosyl pyrophosphate synthase-associated protein 1 (356 aa).

An N-acetylmethionine modification is found at Met1. Position 2 is an N-acetylproline (Asn2). Ser177 and Ser215 each carry phosphoserine.

This sequence belongs to the ribose-phosphate pyrophosphokinase family. As to quaternary structure, binds to PRPS1 and PRPS2. In terms of tissue distribution, ubiquitous.

In terms of biological role, seems to play a negative regulatory role in 5-phosphoribose 1-diphosphate synthesis. In Homo sapiens (Human), this protein is Phosphoribosyl pyrophosphate synthase-associated protein 1 (PRPSAP1).